Reading from the N-terminus, the 165-residue chain is UPF0254 protein MmarC7_0182 (165 aa).

It belongs to the UPF0254 family.

The sequence is that of UPF0254 protein MmarC7_0182 from Methanococcus maripaludis (strain C7 / ATCC BAA-1331).